Here is a 259-residue protein sequence, read N- to C-terminus: Probable metal transport system ATP-binding protein CPn_0348/CP_0412/CPj0348/CpB0355 (259 aa).

The ABC transporter domain occupies 3 to 241 (VKDETFWSVH…TIFQTYGCEI (239 aa)). 41-48 (GPNGAGKS) serves as a coordination point for ATP.

This sequence belongs to the ABC transporter superfamily.

The protein localises to the cell inner membrane. Functionally, part of an ATP-driven transport system CPn0346/CPn0347/CPn0348/CPn0349 for a metal. Probably responsible for energy coupling to the transport system. The polypeptide is Probable metal transport system ATP-binding protein CPn_0348/CP_0412/CPj0348/CpB0355 (Chlamydia pneumoniae (Chlamydophila pneumoniae)).